The primary structure comprises 334 residues: L-lactate dehydrogenase B chain (334 aa).

Position 2 is an N-acetylalanine (Ala2). Lys7 is modified (N6-acetyllysine). Ser44 carries the post-translational modification Phosphoserine. NAD(+) contacts are provided by residues 53 to 58 (DVLEDK) and Arg100. N6-acetyllysine is present on Lys58. Substrate is bound at residue Arg107. Lys119 is modified (N6-acetyllysine). Position 139 (Asn139) interacts with NAD(+). Substrate-binding residues include Asn139 and Arg170. The Proton acceptor role is filled by His194. Tyr240 carries the phosphotyrosine modification. Position 249 (Thr249) interacts with substrate. Lys329 is subject to N6-acetyllysine.

This sequence belongs to the LDH/MDH superfamily. LDH family. As to quaternary structure, homotetramer. Interacts with PTEN upstream reading frame protein MP31; the interaction leads to inhibition of mitochondrial lactate dehydrogenase activity, preventing conversion of lactate to pyruvate in mitochondria.

It localises to the cytoplasm. It is found in the mitochondrion inner membrane. The catalysed reaction is (S)-lactate + NAD(+) = pyruvate + NADH + H(+). It participates in fermentation; pyruvate fermentation to lactate; (S)-lactate from pyruvate: step 1/1. Functionally, interconverts simultaneously and stereospecifically pyruvate and lactate with concomitant interconversion of NADH and NAD(+). The sequence is that of L-lactate dehydrogenase B chain (LDHB) from Monodelphis domestica (Gray short-tailed opossum).